A 254-amino-acid chain; its full sequence is Probable phosphatase TTE1963 (254 aa).

Residues His-14, His-16, His-22, His-47, Glu-80, His-108, His-139, Asp-200, and His-202 each coordinate Zn(2+).

This sequence belongs to the PHP family. It depends on Zn(2+) as a cofactor.

This chain is Probable phosphatase TTE1963, found in Caldanaerobacter subterraneus subsp. tengcongensis (strain DSM 15242 / JCM 11007 / NBRC 100824 / MB4) (Thermoanaerobacter tengcongensis).